Here is a 476-residue protein sequence, read N- to C-terminus: Bifunctional protein HldE (476 aa).

The ribokinase stretch occupies residues 1-318 (MKVTLPDFRR…ENAIRGRAET (318 aa)). An ATP-binding site is contributed by 195 to 198 (NLSE). Residue Asp264 is part of the active site. Positions 344 to 476 (MTNGIFDILH…IIQSIKNGLG (133 aa)) are cytidylyltransferase.

This sequence in the N-terminal section; belongs to the carbohydrate kinase PfkB family. In the C-terminal section; belongs to the cytidylyltransferase family. In terms of assembly, homodimer.

The enzyme catalyses D-glycero-beta-D-manno-heptose 7-phosphate + ATP = D-glycero-beta-D-manno-heptose 1,7-bisphosphate + ADP + H(+). It carries out the reaction D-glycero-beta-D-manno-heptose 1-phosphate + ATP + H(+) = ADP-D-glycero-beta-D-manno-heptose + diphosphate. It participates in nucleotide-sugar biosynthesis; ADP-L-glycero-beta-D-manno-heptose biosynthesis; ADP-L-glycero-beta-D-manno-heptose from D-glycero-beta-D-manno-heptose 7-phosphate: step 1/4. It functions in the pathway nucleotide-sugar biosynthesis; ADP-L-glycero-beta-D-manno-heptose biosynthesis; ADP-L-glycero-beta-D-manno-heptose from D-glycero-beta-D-manno-heptose 7-phosphate: step 3/4. Its function is as follows. Catalyzes the phosphorylation of D-glycero-D-manno-heptose 7-phosphate at the C-1 position to selectively form D-glycero-beta-D-manno-heptose-1,7-bisphosphate. Catalyzes the ADP transfer from ATP to D-glycero-beta-D-manno-heptose 1-phosphate, yielding ADP-D-glycero-beta-D-manno-heptose. This chain is Bifunctional protein HldE, found in Yersinia enterocolitica serotype O:8 / biotype 1B (strain NCTC 13174 / 8081).